Reading from the N-terminus, the 66-residue chain is Panusin (66 aa).

An N-terminal signal peptide occupies residues 1–22; it reads MKTKAVLMLMLLVLVAATLVQG. A propeptide spanning residues 23-26 is cleaved from the precursor; that stretch reads EPEP. Intrachain disulfides connect Cys-32/Cys-54, Cys-39/Cys-61, and Cys-44/Cys-60. Tyr-65 carries the post-translational modification Tyrosine amide.

As to quaternary structure, forms dimers and higher-order oligomers. Post-translationally, contains 3 disulfide bonds.

Its function is as follows. Antimicrobial peptide. Has antibacterial activity against Gram-positive bacteria S.aureus ATCC 29737 and B.subtilis ATCC 6633 as well as against Gram-negative bacteria E.coli ATCC 10536 and K.pneumoniae ATCC 10031. This Panulirus argus (Caribbean spiny lobster) protein is Panusin.